The following is a 201-amino-acid chain: Retinol-binding protein 4 (201 aa).

The first 18 residues, 1–18 (MKWVWALLLLAALGSGRA), serve as a signal peptide directing secretion. 3 disulfides stabilise this stretch: Cys22–Cys178, Cys88–Cys192, and Cys138–Cys147. Position 116 (Gln116) interacts with substrate. An Omega-N-methylarginine modification is found at Arg139.

This sequence belongs to the calycin superfamily. Lipocalin family. Interacts with TTR. Interaction with TTR prevents its loss by filtration through the kidney glomeruli. Interacts with STRA6. Detected in blood plasma and in urine (at protein level).

It is found in the secreted. Its function is as follows. Retinol-binding protein that mediates retinol transport in blood plasma. Delivers retinol from the liver stores to the peripheral tissues. Transfers the bound all-trans retinol to STRA6, that then facilitates retinol transport across the cell membrane. In Homo sapiens (Human), this protein is Retinol-binding protein 4 (RBP4).